We begin with the raw amino-acid sequence, 640 residues long: Telomere repeat-binding protein 4 (640 aa).

A Ubiquitin-like domain is found at 343-422 (VKFSIKSLRI…LGNLGFTLEP (80 aa)). Residues 442-464 (TDSTKLSERSAASPALETGIPLP) are disordered. Positions 530-589 (SQRRTRRPFSVTEVEALVSAVEEVGTGRWRDVKLRSFENASHRTYVDLKDKWKTLVHTAS) constitute an HTH myb-type domain. The segment at residues 558 to 585 (WRDVKLRSFENASHRTYVDLKDKWKTLV) is a DNA-binding region (H-T-H motif).

Homomultimer. Interacts with SNL1 (via PAH2). Interacts with STO. In terms of tissue distribution, expressed ubiquitously. Highest expression in flowers and roots.

The protein localises to the nucleus. Binds specifically to the plant telomeric double-stranded DNA sequences 5'-TTTAGGG-3'. At least 2 repeats of telomeric sequences are required for binding. Induces DNA bending. This is Telomere repeat-binding protein 4 (TRP4) from Arabidopsis thaliana (Mouse-ear cress).